The following is a 442-amino-acid chain: PCI domain-containing protein C1105.07c (442 aa).

The PCI domain occupies 224-415 (VTFRYYLGRC…STLVLKKDPS (192 aa)).

It is found in the cytoplasm. It localises to the nucleus envelope. This is PCI domain-containing protein C1105.07c from Schizosaccharomyces pombe (strain 972 / ATCC 24843) (Fission yeast).